A 531-amino-acid polypeptide reads, in one-letter code: Probable protein phosphatase 2C 66 (531 aa).

The disordered stretch occupies residues 1–47 (MGSCLSSDLPPRAGAGAGASPGWPQRWRRRRQRGVERGGAVSGGGGG). Residues 10-25 (PPRAGAGAGASPGWPQ) are compositionally biased toward low complexity. Residues 88–401 (AACLHTQQGR…DDCAVVCLFL (314 aa)) form the PPM-type phosphatase domain. Residues D123 and G124 each contribute to the Mn(2+) site. Over residues 151–172 (SANEDTSSHQNGSISGSVNSEE) the composition is skewed to polar residues. The disordered stretch occupies residues 151–176 (SANEDTSSHQNGSISGSVNSEESPVV). Mn(2+)-binding residues include D346 and D392.

It belongs to the PP2C family. Requires Mg(2+) as cofactor. The cofactor is Mn(2+).

The catalysed reaction is O-phospho-L-seryl-[protein] + H2O = L-seryl-[protein] + phosphate. It catalyses the reaction O-phospho-L-threonyl-[protein] + H2O = L-threonyl-[protein] + phosphate. The sequence is that of Probable protein phosphatase 2C 66 from Oryza sativa subsp. japonica (Rice).